Consider the following 82-residue polypeptide: Penaeidin-3h (82 aa).

The first 19 residues, 1 to 19 (MRLVVCLVFLASFALVCQG), serve as a signal peptide directing secretion. Pyrrolidone carboxylic acid is present on glutamine 20. 2 disulfides stabilise this stretch: cysteine 55-cysteine 73 and cysteine 67-cysteine 74. Serine 81 is modified (serine amide).

It belongs to the penaeidin family.

It is found in the cytoplasmic granule. Its function is as follows. Antibacterial and antifungal activity. Presents chitin-binding activity. The protein is Penaeidin-3h of Penaeus vannamei (Whiteleg shrimp).